Reading from the N-terminus, the 366-residue chain is Anthranilate phosphoribosyltransferase (366 aa).

5-phospho-alpha-D-ribose 1-diphosphate-binding positions include G103, 106–107 (GD), T111, 113–116 (NLST), 131–139 (KHGNRASSS), and G143. G103 contributes to the anthranilate binding site. S115 serves as a coordination point for Mg(2+). N134 serves as a coordination point for anthranilate. R189 serves as a coordination point for anthranilate. Positions 247 and 248 each coordinate Mg(2+).

This sequence belongs to the anthranilate phosphoribosyltransferase family. Homodimer. Requires Mg(2+) as cofactor.

It carries out the reaction N-(5-phospho-beta-D-ribosyl)anthranilate + diphosphate = 5-phospho-alpha-D-ribose 1-diphosphate + anthranilate. Its pathway is amino-acid biosynthesis; L-tryptophan biosynthesis; L-tryptophan from chorismate: step 2/5. Functionally, catalyzes the transfer of the phosphoribosyl group of 5-phosphorylribose-1-pyrophosphate (PRPP) to anthranilate to yield N-(5'-phosphoribosyl)-anthranilate (PRA). The sequence is that of Anthranilate phosphoribosyltransferase from Mycobacterium leprae (strain Br4923).